Consider the following 130-residue polypeptide: Ribonuclease P protein component 2 (130 aa).

It belongs to the eukaryotic/archaeal RNase P protein component 2 family. In terms of assembly, consists of a catalytic RNA component and at least 4-5 protein subunits.

It localises to the cytoplasm. The enzyme catalyses Endonucleolytic cleavage of RNA, removing 5'-extranucleotides from tRNA precursor.. Part of ribonuclease P, a protein complex that generates mature tRNA molecules by cleaving their 5'-ends. This is Ribonuclease P protein component 2 from Methanococcus maripaludis (strain C7 / ATCC BAA-1331).